The chain runs to 319 residues: Acetyl-coenzyme A carboxylase carboxyl transferase subunit alpha (319 aa).

Positions 39–293 (RLQKKSNDLT…KAVLEKQLHE (255 aa)) constitute a CoA carboxyltransferase C-terminal domain.

It belongs to the AccA family. Acetyl-CoA carboxylase is a heterohexamer composed of biotin carboxyl carrier protein (AccB), biotin carboxylase (AccC) and two subunits each of ACCase subunit alpha (AccA) and ACCase subunit beta (AccD).

It localises to the cytoplasm. The catalysed reaction is N(6)-carboxybiotinyl-L-lysyl-[protein] + acetyl-CoA = N(6)-biotinyl-L-lysyl-[protein] + malonyl-CoA. It participates in lipid metabolism; malonyl-CoA biosynthesis; malonyl-CoA from acetyl-CoA: step 1/1. Functionally, component of the acetyl coenzyme A carboxylase (ACC) complex. First, biotin carboxylase catalyzes the carboxylation of biotin on its carrier protein (BCCP) and then the CO(2) group is transferred by the carboxyltransferase to acetyl-CoA to form malonyl-CoA. This chain is Acetyl-coenzyme A carboxylase carboxyl transferase subunit alpha, found in Neisseria meningitidis serogroup C / serotype 2a (strain ATCC 700532 / DSM 15464 / FAM18).